The chain runs to 674 residues: Alpha-L-arabinofuranosidase 2 (674 aa).

Positions M1–S24 are cleaved as a signal peptide. N-linked (GlcNAc...) asparagine glycosylation is found at N48, N180, N199, N210, N361, N522, and N548.

It belongs to the glycosyl hydrolase 51 family. In terms of tissue distribution, high expression in flowers, siliques and stems. Observed in the vasculature of older root tissue, at the tip of anthers and in the petal blade of fully developed flowers, in floral abscission zones and in silique replum tissue. Expressed in the cambium and phloem, but not in the xylem or in the vascular system of floral tissues.

The protein resides in the secreted. It localises to the extracellular space. It is found in the extracellular matrix. The enzyme catalyses Hydrolysis of terminal non-reducing alpha-L-arabinofuranoside residues in alpha-L-arabinosides.. May be involved in the coordinated dissolution of the cell wall matrix during abscission and in the secondary cell wall formation in xylem vessels. This Arabidopsis thaliana (Mouse-ear cress) protein is Alpha-L-arabinofuranosidase 2 (ASD2).